We begin with the raw amino-acid sequence, 158 residues long: Toxin Tse2 (158 aa).

In terms of assembly, forms a heterotetramer with Tsi2 consisting of two Tse2 dimers and two Tsi2 dimers. Formation of the complex inactivates Tse2 enzymatic activity.

The protein resides in the secreted. In terms of biological role, toxin secreted by the H1 type VI (H1-T6SS) secretion system into the cytoplasm of recipient cells. Acts likely as a NAD-dependent cytotoxin towards both prokaryotic and eukaryotic cells. This Pseudomonas aeruginosa (strain ATCC 15692 / DSM 22644 / CIP 104116 / JCM 14847 / LMG 12228 / 1C / PRS 101 / PAO1) protein is Toxin Tse2.